The chain runs to 326 residues: Lipoyl synthase (326 aa).

C74, C79, C85, C100, C104, C107, and S314 together coordinate [4Fe-4S] cluster. Positions 85–303 constitute a Radical SAM core domain; that stretch reads CFGRGTATFM…EEEAYKMGFS (219 aa).

The protein belongs to the radical SAM superfamily. Lipoyl synthase family. Requires [4Fe-4S] cluster as cofactor.

It localises to the cytoplasm. The enzyme catalyses [[Fe-S] cluster scaffold protein carrying a second [4Fe-4S](2+) cluster] + N(6)-octanoyl-L-lysyl-[protein] + 2 oxidized [2Fe-2S]-[ferredoxin] + 2 S-adenosyl-L-methionine + 4 H(+) = [[Fe-S] cluster scaffold protein] + N(6)-[(R)-dihydrolipoyl]-L-lysyl-[protein] + 4 Fe(3+) + 2 hydrogen sulfide + 2 5'-deoxyadenosine + 2 L-methionine + 2 reduced [2Fe-2S]-[ferredoxin]. The protein operates within protein modification; protein lipoylation via endogenous pathway; protein N(6)-(lipoyl)lysine from octanoyl-[acyl-carrier-protein]: step 2/2. Catalyzes the radical-mediated insertion of two sulfur atoms into the C-6 and C-8 positions of the octanoyl moiety bound to the lipoyl domains of lipoate-dependent enzymes, thereby converting the octanoylated domains into lipoylated derivatives. This is Lipoyl synthase from Acidovorax ebreus (strain TPSY) (Diaphorobacter sp. (strain TPSY)).